Here is a 387-residue protein sequence, read N- to C-terminus: Aminodeoxyfutalosine synthase (387 aa).

The Radical SAM core domain occupies 52 to 279 (VHFNVNRHLN…ARTQMATGAE (228 aa)). Residues cysteine 66, cysteine 70, and cysteine 73 each contribute to the [4Fe-4S] cluster site.

The protein belongs to the radical SAM superfamily. MqnE family. [4Fe-4S] cluster is required as a cofactor.

It carries out the reaction 3-[(1-carboxyvinyl)-oxy]benzoate + S-adenosyl-L-methionine + H2O = 6-amino-6-deoxyfutalosine + hydrogencarbonate + L-methionine + H(+). It functions in the pathway quinol/quinone metabolism; menaquinone biosynthesis. Functionally, radical SAM enzyme that catalyzes the addition of the adenosyl radical to the double bond of 3-[(1-carboxyvinyl)oxy]benzoate, leading to aminodeoxyfutalosine (AFL), a key intermediate in the formation of menaquinone (MK, vitamin K2) from chorismate. The chain is Aminodeoxyfutalosine synthase from Streptomyces coelicolor (strain ATCC BAA-471 / A3(2) / M145).